The primary structure comprises 337 residues: Annexin E1 (337 aa).

Annexin repeat units follow at residues 10–80 (TGVT…MLYK), 81–154 (PRAQ…AVAT), 161–238 (DTHE…LAHD), and 242–312 (DPCC…LLWE).

It belongs to the annexin family.

The protein localises to the cell projection. The protein resides in the cilium. It is found in the flagellum. In terms of biological role, may function as a calcium-regulated structural element linking phospholipid bilayer and underlying axoneme. The protein is Annexin E1 (ANXE1) of Giardia intestinalis (Giardia lamblia).